The following is a 258-amino-acid chain: Hydroxyethylthiazole kinase (258 aa).

Met-37 contributes to the substrate binding site. Positions 112 and 158 each coordinate ATP. Ala-185 provides a ligand contact to substrate.

This sequence belongs to the Thz kinase family. The cofactor is Mg(2+).

The enzyme catalyses 5-(2-hydroxyethyl)-4-methylthiazole + ATP = 4-methyl-5-(2-phosphooxyethyl)-thiazole + ADP + H(+). It participates in cofactor biosynthesis; thiamine diphosphate biosynthesis; 4-methyl-5-(2-phosphoethyl)-thiazole from 5-(2-hydroxyethyl)-4-methylthiazole: step 1/1. Catalyzes the phosphorylation of the hydroxyl group of 4-methyl-5-beta-hydroxyethylthiazole (THZ). The sequence is that of Hydroxyethylthiazole kinase from Rhizobium etli (strain CIAT 652).